The primary structure comprises 652 residues: DNA ligase (652 aa).

Residues Asp29 to Asp33, Ser78 to Leu79, and Glu107 each bind NAD(+). The active-site N6-AMP-lysine intermediate is the Lys109. NAD(+) is bound by residues Arg130, Glu164, Lys278, and Lys302. Zn(2+) is bound by residues Cys395, Cys398, Cys413, and Cys418. Positions Ala577–Leu652 constitute a BRCT domain.

It belongs to the NAD-dependent DNA ligase family. LigA subfamily. The cofactor is Mg(2+). It depends on Mn(2+) as a cofactor.

The catalysed reaction is NAD(+) + (deoxyribonucleotide)n-3'-hydroxyl + 5'-phospho-(deoxyribonucleotide)m = (deoxyribonucleotide)n+m + AMP + beta-nicotinamide D-nucleotide.. In terms of biological role, DNA ligase that catalyzes the formation of phosphodiester linkages between 5'-phosphoryl and 3'-hydroxyl groups in double-stranded DNA using NAD as a coenzyme and as the energy source for the reaction. It is essential for DNA replication and repair of damaged DNA. This is DNA ligase from Streptococcus gordonii (strain Challis / ATCC 35105 / BCRC 15272 / CH1 / DL1 / V288).